We begin with the raw amino-acid sequence, 172 residues long: Nicotinamide-nucleotide adenylyltransferase (172 aa).

The protein belongs to the archaeal NMN adenylyltransferase family.

It localises to the cytoplasm. It carries out the reaction beta-nicotinamide D-ribonucleotide + ATP + H(+) = diphosphate + NAD(+). The protein operates within cofactor biosynthesis; NAD(+) biosynthesis; NAD(+) from nicotinamide D-ribonucleotide: step 1/1. This Saccharolobus solfataricus (strain ATCC 35092 / DSM 1617 / JCM 11322 / P2) (Sulfolobus solfataricus) protein is Nicotinamide-nucleotide adenylyltransferase.